Consider the following 357-residue polypeptide: Methylthioribose-1-phosphate isomerase (357 aa).

Substrate is bound by residues 49–51 (RGA), arginine 89, and glutamine 197. Aspartate 238 acts as the Proton donor in catalysis. Substrate is bound at residue 248–249 (NK).

Belongs to the eIF-2B alpha/beta/delta subunits family. MtnA subfamily.

The catalysed reaction is 5-(methylsulfanyl)-alpha-D-ribose 1-phosphate = 5-(methylsulfanyl)-D-ribulose 1-phosphate. It participates in amino-acid biosynthesis; L-methionine biosynthesis via salvage pathway; L-methionine from S-methyl-5-thio-alpha-D-ribose 1-phosphate: step 1/6. Functionally, catalyzes the interconversion of methylthioribose-1-phosphate (MTR-1-P) into methylthioribulose-1-phosphate (MTRu-1-P). The chain is Methylthioribose-1-phosphate isomerase from Leptospira biflexa serovar Patoc (strain Patoc 1 / Ames).